A 604-amino-acid chain; its full sequence is Prostaglandin G/H synthase 2 (604 aa).

An N-terminal signal peptide occupies residues 1–17 (MLARALLLCVALALGHA). The region spanning 18 to 55 (ANPCCSNPCQNRGVCMSVGFDQYQCDCTRTGFYGENCS) is the EGF-like domain. 4 disulfides stabilise this stretch: C21–C32, C22–C145, C26–C42, and C44–C54. N-linked (GlcNAc...) asparagine glycosylation occurs at N53. R106 provides a ligand contact to substrate. N130 carries N-linked (GlcNAc...) asparagine glycosylation. The active-site Proton acceptor is the H193. Y341 lines the substrate pocket. The For cyclooxygenase activity role is filled by Y371. H374 is a heme b binding site. An N-linked (GlcNAc...) asparagine glycan is attached at N396. S-nitrosocysteine is present on C526. A disulfide bridge links C555 with C561. An N-linked (GlcNAc...) asparagine glycan is attached at N580.

The protein belongs to the prostaglandin G/H synthase family. In terms of assembly, homodimer. Heme b serves as cofactor. S-nitrosylation by NOS2 (iNOS) activates enzyme activity. S-nitrosylation may take place on different Cys residues in addition to Cys-526.

It localises to the microsome membrane. The protein resides in the endoplasmic reticulum membrane. It is found in the nucleus inner membrane. The protein localises to the nucleus outer membrane. It carries out the reaction (5Z,8Z,11Z,14Z)-eicosatetraenoate + AH2 + 2 O2 = prostaglandin H2 + A + H2O. The enzyme catalyses (5Z,8Z,11Z,14Z)-eicosatetraenoate + 2 O2 = prostaglandin G2. It catalyses the reaction prostaglandin G2 + AH2 = prostaglandin H2 + A + H2O. The catalysed reaction is (5Z,8Z,11Z,14Z,17Z)-eicosapentaenoate + 2 O2 = prostaglandin G3. It carries out the reaction prostaglandin G3 + AH2 = prostaglandin H3 + A + H2O. The enzyme catalyses (8Z,11Z,14Z)-eicosatrienoate + 2 O2 = prostaglandin G1. It catalyses the reaction prostaglandin G1 + AH2 = prostaglandin H1 + A + H2O. The catalysed reaction is 2-(5Z,8Z,11Z,14Z)-eicosatetraenoyl-sn-glycero-3-phosphoethanolamine + 2 O2 = 2-(prostaglandin G2)-sn-glycero-3-phosphoethanolamine. It carries out the reaction 2-(prostaglandin G2)-sn-glycero-3-phosphoethanolamine + AH2 = 2-(prostaglandin H2)-sn-glycero-3-phosphoethanolamine + A + H2O. The enzyme catalyses 2-(5Z,8Z,11Z,14Z)-eicosatetraenoyl-sn-glycero-3-phosphocholine + 2 O2 = 2-(prostaglandin G2)-sn-glycero-3-phosphocholine. It catalyses the reaction 2-(prostaglandin G2)-sn-glycero-3-phosphocholine + AH2 = 2-(prostaglandin H2)-sn-glycero-3-phosphocholine + A + H2O. The catalysed reaction is (15S)-hydroperoxy-(5Z,8Z,11Z,13E)-eicosatetraenoate + AH2 = (15S)-hydroxy-(5Z,8Z,11Z,13E)-eicosatetraenoate + A + H2O. It carries out the reaction 2-(5Z,8Z,11Z,14Z)-eicosatetraenoyl-sn-glycero-3-phosphocholine + AH2 + O2 = 2-[(15S)-hydroxy-(5Z,8Z,11Z,13E)-eicosatetraenoyl]-sn-glycero-3-phosphocholine + A + H2O. The enzyme catalyses 2-(5Z,8Z,11Z,14Z)-eicosatetraenoyl-sn-glycero-3-phosphocholine + AH2 + O2 = 2-[(15R)-hydroxy-(5Z,8Z,11Z,13E)-eicosatetraenoyl]-sn-glycero-3-phosphocholine + A + H2O. It catalyses the reaction 2-(5Z,8Z,11Z,14Z)-eicosatetraenoyl-sn-glycero-3-phosphocholine + AH2 + O2 = 2-[(11R)-hydroxy-(5Z,8Z,12E,14Z)-eicosatetraenoyl]-sn-glycero-3-phosphocholine + A + H2O. The catalysed reaction is (9Z,12Z)-octadecadienoate + AH2 + O2 = 9-hydroxy-(10E,12Z)-octadecadienoate + A + H2O. It carries out the reaction (9Z,12Z)-octadecadienoate + AH2 + O2 = 13-hydroxy-(9Z,11E)-octadecadienoate + A + H2O. The enzyme catalyses (5Z,8Z,11Z,14Z)-eicosatetraenoate + AH2 + O2 = (15R)-hydroxy-(5Z,8Z,11Z,13E)-eicosatetraenoate + A + H2O. It catalyses the reaction (5Z,8Z,11Z,14Z)-eicosatetraenoate + AH2 + O2 = (11R)-hydroxy-(5Z,8Z,12E,14Z)-eicosatetraenoate + A + H2O. The catalysed reaction is (5Z,8Z,11Z,14Z,17Z)-eicosapentaenoate + AH2 + O2 = (11R)-hydroxy-(5Z,8Z,12E,14Z,17Z)-eicosapentaenoate + A + H2O. It carries out the reaction (5Z,8Z,11Z,14Z,17Z)-eicosapentaenoate + AH2 + O2 = (18S)-hydroxy-(5Z,8Z,11Z,14Z,16E)-eicosapentaenoate + A + H2O. The enzyme catalyses (5Z,8Z,11Z,14Z,17Z)-eicosapentaenoate + AH2 + O2 = (18R)-hydroxy-(5Z,8Z,11Z,14Z,16E)-eicosapentaenoate + A + H2O. It catalyses the reaction (5Z,8Z,11Z,14Z,17Z)-eicosapentaenoate + AH2 + O2 = (15R)-hydroxy-(5Z,8Z,11Z,13E,17Z)-eicosapentaenoate + A + H2O. The catalysed reaction is (5Z,8Z,11Z,14Z,17Z)-eicosapentaenoate + AH2 + O2 = (15S)-hydroxy-(5Z,8Z,11Z,13E,17Z)-eicosapentaenoate + A + H2O. It carries out the reaction (7Z,10Z,13Z,16Z,19Z)-docosapentaenoate + AH2 + O2 = 13R-hydroxy-(7Z,10Z,14E,16Z,19Z)-docosapentaenoate + A + H2O. The enzyme catalyses (4Z,7Z,10Z,13Z,16Z,19Z)-docosahexaenoate + AH2 + O2 = 13-hydroxy-(4Z,7Z,10Z,14E,16Z,19Z)-docosahexaenoate + A + H2O. It catalyses the reaction (5S)-hydroxy-(6E,8Z,11Z,14Z)-eicosatetraenoate + AH2 + O2 = (5S,15R)-dihydroxy-(6E,8Z,11Z,13E)-eicosatetraenoate + A + H2O. The catalysed reaction is (4Z,7Z,10Z,13Z,16Z,19Z)-docosahexaenoate + AH2 + O2 = 17R-hydroxy-(4Z,7Z,10Z,13Z,15E,19Z)-docosahexaenoate + A + H2O. It carries out the reaction (5S)-hydroxy-(6E,8Z,11Z,14Z)-eicosatetraenoate + AH2 + O2 = (5S,15S)-dihydroxy-(6E,8Z,11Z,13E)-eicosatetraenoate + A + H2O. The enzyme catalyses (5S)-hydroxy-(6E,8Z,11Z,14Z)-eicosatetraenoate + AH2 + O2 = (5S,11R)-dihydroxy-(6E,8Z,12E,14Z)-eicosatetraenoate + A + H2O. It catalyses the reaction 2-(5Z,8Z,11Z,14Z-eicosatetraenoyl)-glycerol + 2 O2 = 2-glyceryl-prostaglandin G2. The catalysed reaction is 2-glyceryl-prostaglandin G2 + AH2 = 2-glyceryl-prostaglandin H2 + A + H2O. It carries out the reaction (5Z,8Z,11Z,14Z)-eicosatetraenoate + O2 = (15R)-hydroperoxy-(5Z,8Z,11Z,13E)-eicosatetraenoate. The enzyme catalyses (5Z,8Z,11Z,14Z)-eicosatetraenoate + O2 = 11R-hydroperoxy-(5Z,8Z,12E,14Z)-eicosatetraenoate. It catalyses the reaction (9Z,12Z)-octadecadienoate + AH2 + O2 = (9R)-hydroxy-(10E,12Z)-octadecadienoate + A + H2O. The catalysed reaction is (9Z,12Z)-octadecadienoate + AH2 + O2 = (9S)-hydroxy-(10E,12Z)-octadecadienoate + A + H2O. It carries out the reaction (9Z,12Z)-octadecadienoate + AH2 + O2 = (13S)-hydroxy-(9Z,11E)-octadecadienoate + A + H2O. The enzyme catalyses (9Z,12Z)-octadecadienoate + AH2 + O2 = (13R)-hydroxy-(9Z,11E)-octadecadienoate + A + H2O. The protein operates within lipid metabolism; prostaglandin biosynthesis. Functionally, dual cyclooxygenase and peroxidase in the biosynthesis pathway of prostanoids, a class of C20 oxylipins mainly derived from arachidonate ((5Z,8Z,11Z,14Z)-eicosatetraenoate, AA, C20:4(n-6)), with a particular role in the inflammatory response. The cyclooxygenase activity oxygenates AA to the hydroperoxy endoperoxide prostaglandin G2 (PGG2), and the peroxidase activity reduces PGG2 to the hydroxy endoperoxide prostaglandin H2 (PGH2), the precursor of all 2-series prostaglandins and thromboxanes. This complex transformation is initiated by abstraction of hydrogen at carbon 13 (with S-stereochemistry), followed by insertion of molecular O2 to form the endoperoxide bridge between carbon 9 and 11 that defines prostaglandins. The insertion of a second molecule of O2 (bis-oxygenase activity) yields a hydroperoxy group in PGG2 that is then reduced to PGH2 by two electrons. Similarly catalyzes successive cyclooxygenation and peroxidation of dihomo-gamma-linoleate (DGLA, C20:3(n-6)) and eicosapentaenoate (EPA, C20:5(n-3)) to corresponding PGH1 and PGH3, the precursors of 1- and 3-series prostaglandins. In an alternative pathway of prostanoid biosynthesis, converts 2-arachidonoyl lysophopholipids to prostanoid lysophopholipids, which are then hydrolyzed by intracellular phospholipases to release free prostanoids. Metabolizes 2-arachidonoyl glycerol yielding the glyceryl ester of PGH2, a process that can contribute to pain response. Generates lipid mediators from n-3 and n-6 polyunsaturated fatty acids (PUFAs) via a lipoxygenase-type mechanism. Oxygenates PUFAs to hydroperoxy compounds and then reduces them to corresponding alcohols. Plays a role in the generation of resolution phase interaction products (resolvins) during both sterile and infectious inflammation. Metabolizes docosahexaenoate (DHA, C22:6(n-3)) to 17R-HDHA, a precursor of the D-series resolvins (RvDs). As a component of the biosynthetic pathway of E-series resolvins (RvEs), converts eicosapentaenoate (EPA, C20:5(n-3)) primarily to 18S-HEPE that is further metabolized by ALOX5 and LTA4H to generate 18S-RvE1 and 18S-RvE2. In vascular endothelial cells, converts docosapentaenoate (DPA, C22:5(n-3)) to 13R-HDPA, a precursor for 13-series resolvins (RvTs) shown to activate macrophage phagocytosis during bacterial infection. In activated leukocytes, contributes to oxygenation of hydroxyeicosatetraenoates (HETE) to diHETES (5,15-diHETE and 5,11-diHETE). Can also use linoleate (LA, (9Z,12Z)-octadecadienoate, C18:2(n-6)) as substrate and produce hydroxyoctadecadienoates (HODEs) in a regio- and stereospecific manner, being (9R)-HODE ((9R)-hydroxy-(10E,12Z)-octadecadienoate) and (13S)-HODE ((13S)-hydroxy-(9Z,11E)-octadecadienoate) its major products. During neuroinflammation, plays a role in neuronal secretion of specialized preresolving mediators (SPMs) 15R-lipoxin A4 that regulates phagocytic microglia. This chain is Prostaglandin G/H synthase 2 (PTGS2), found in Equus caballus (Horse).